A 375-amino-acid chain; its full sequence is 23S rRNA (uracil(747)-C(5))-methyltransferase RlmC (375 aa).

[4Fe-4S] cluster-binding residues include C3, C11, C14, and C87. The S-adenosyl-L-methionine site is built by Q212, F241, E262, and N307. C334 serves as the catalytic Nucleophile.

This sequence belongs to the class I-like SAM-binding methyltransferase superfamily. RNA M5U methyltransferase family. RlmC subfamily.

The enzyme catalyses uridine(747) in 23S rRNA + S-adenosyl-L-methionine = 5-methyluridine(747) in 23S rRNA + S-adenosyl-L-homocysteine + H(+). Its function is as follows. Catalyzes the formation of 5-methyl-uridine at position 747 (m5U747) in 23S rRNA. This chain is 23S rRNA (uracil(747)-C(5))-methyltransferase RlmC, found in Serratia proteamaculans (strain 568).